The chain runs to 450 residues: Probable ECA polymerase (450 aa).

Transmembrane regions (helical) follow at residues 6–26, 37–57, 63–83, 118–138, 155–175, 181–201, 207–227, 228–248, 341–361, 378–398, and 410–430; these read FSGLFVVWLLCTLFIATLTWF, VFFSLLFLLTFFFGFPLTSVL, VGVAPPEILLQALLSAGCFYA, VILMGIALVSVGIFFMHNGFL, GVALKRFFYFFIPAMLVVYFL, AWLFFLVSTVAFGLLTYMIVG, IIIAFAIFLFIGIIRGWISLW, MLAAAGVLGIVGMFWLALKRY, LVVMGGALFIPLGAIVVGLII, YKAAILHSFCFGAIFNMIVLA, and VFFIVVFGACLMIAKLLYWLF.

This sequence belongs to the WzyE family. As to quaternary structure, probably part of a complex composed of WzxE, WzyE and WzzE.

It is found in the cell inner membrane. It functions in the pathway bacterial outer membrane biogenesis; enterobacterial common antigen biosynthesis. Functionally, probably involved in the polymerization of enterobacterial common antigen (ECA) trisaccharide repeat units. The sequence is that of Probable ECA polymerase from Shigella boydii serotype 18 (strain CDC 3083-94 / BS512).